The chain runs to 226 residues: ATP synthase subunit a (226 aa).

Transmembrane regions (helical) follow at residues Phe-18–Ala-38, Val-44–Ala-64, Leu-79–Phe-99, Ser-105–Ile-125, Phe-137–Phe-157, Phe-177–Leu-197, and Leu-202–Val-222.

This sequence belongs to the ATPase A chain family. F-type ATPases have 2 components, CF(1) - the catalytic core - and CF(0) - the membrane proton channel. CF(1) has five subunits: alpha(3), beta(3), gamma(1), delta(1), epsilon(1). CF(0) has three main subunits: a(1), b(2) and c(9-12). The alpha and beta chains form an alternating ring which encloses part of the gamma chain. CF(1) is attached to CF(0) by a central stalk formed by the gamma and epsilon chains, while a peripheral stalk is formed by the delta and b chains.

It localises to the cell inner membrane. Functionally, key component of the proton channel; it plays a direct role in the translocation of protons across the membrane. The protein is ATP synthase subunit a of Helicobacter hepaticus (strain ATCC 51449 / 3B1).